A 96-amino-acid chain; its full sequence is Large ribosomal subunit protein bL27 (96 aa).

The propeptide occupies 1 to 9; the sequence is MLRLDLQFF. The segment at 14-36 is disordered; that stretch reads GVGSTKNGRDSQSKRLGAKRADG.

Belongs to the bacterial ribosomal protein bL27 family. Post-translationally, the N-terminus is cleaved by ribosomal processing cysteine protease Prp.

This is Large ribosomal subunit protein bL27 from Bacillus anthracis (strain A0248).